We begin with the raw amino-acid sequence, 513 residues long: MQLNPSEISELLKSRIEGLGASTDVRTQGTVVSVTDGITRIHGLSDVMQGEMLEFPNNVFGVALNLERDSVGAVVLGDYTGVSEGDQVKTTGRILEVPVGPELKGRVVNTLGDAIDGKGPINTTQTDIIEKVAPGVIARRSVSQPLQTGIKAIDSMVPIGRGQRELIIGDRQTGKTAVAVDTIISQKGKGVTCVYVAIGQKASTINNVVRKLEEHGAMEYTIVVAAAASDSAAMQYLAAYAGCTMGEYFRDRGEDALIVYDDLTKQAWAYRQVSLLLRRPPGREAYPGDVFYLHSRLLERAARVNEEYVEKFTNGAVKGKTGSLTALPIIETQAGDVSAFVPTNVISITDGQIFLETDLFNAGVRPAINAGISVSRVGGAAQTKVIKKLSGGIRTDLAQYRELAAFAQFASDLDDATRRQLERGKRVVELLKQPQYQPLQVWELAVSLYAVNNGYLDDVDVAQILAFEKSLKDHLKAKHAALIQRIEDTKELSKDDEAELAAAVQDFKKHGAF.

An ATP-binding site is contributed by 169–176; it reads GDRQTGKT.

Belongs to the ATPase alpha/beta chains family. F-type ATPases have 2 components, CF(1) - the catalytic core - and CF(0) - the membrane proton channel. CF(1) has five subunits: alpha(3), beta(3), gamma(1), delta(1), epsilon(1). CF(0) has three main subunits: a(1), b(2) and c(9-12). The alpha and beta chains form an alternating ring which encloses part of the gamma chain. CF(1) is attached to CF(0) by a central stalk formed by the gamma and epsilon chains, while a peripheral stalk is formed by the delta and b chains.

It is found in the cell inner membrane. The catalysed reaction is ATP + H2O + 4 H(+)(in) = ADP + phosphate + 5 H(+)(out). Functionally, produces ATP from ADP in the presence of a proton gradient across the membrane. The alpha chain is a regulatory subunit. This is ATP synthase subunit alpha from Bordetella bronchiseptica (strain ATCC BAA-588 / NCTC 13252 / RB50) (Alcaligenes bronchisepticus).